Consider the following 406-residue polypeptide: Argininosuccinate synthase (406 aa).

Residues 13-21 and Ala40 contribute to the ATP site; that span reads AYSGGLDTS. L-citrulline is bound by residues Tyr91 and Ser96. Gly121 serves as a coordination point for ATP. Residues Thr123, Asn127, and Asp128 each contribute to the L-aspartate site. Residue Asn127 participates in L-citrulline binding. Residues Arg131, Ser182, Ser191, Glu267, and Tyr279 each contribute to the L-citrulline site.

It belongs to the argininosuccinate synthase family. Type 1 subfamily. As to quaternary structure, homotetramer.

The protein resides in the cytoplasm. The enzyme catalyses L-citrulline + L-aspartate + ATP = 2-(N(omega)-L-arginino)succinate + AMP + diphosphate + H(+). The protein operates within amino-acid biosynthesis; L-arginine biosynthesis; L-arginine from L-ornithine and carbamoyl phosphate: step 2/3. The sequence is that of Argininosuccinate synthase from Brucella abortus (strain S19).